A 441-amino-acid polypeptide reads, in one-letter code: Glutamate-1-semialdehyde 2,1-aminomutase (441 aa).

Lys-276 carries the N6-(pyridoxal phosphate)lysine modification.

Belongs to the class-III pyridoxal-phosphate-dependent aminotransferase family. HemL subfamily. Homodimer. Pyridoxal 5'-phosphate serves as cofactor.

The protein resides in the cytoplasm. The enzyme catalyses (S)-4-amino-5-oxopentanoate = 5-aminolevulinate. Its pathway is porphyrin-containing compound metabolism; protoporphyrin-IX biosynthesis; 5-aminolevulinate from L-glutamyl-tRNA(Glu): step 2/2. The protein is Glutamate-1-semialdehyde 2,1-aminomutase of Rhodococcus jostii (strain RHA1).